A 373-amino-acid chain; its full sequence is Chaperone protein DnaJ (373 aa).

One can recognise a J domain in the interval 4 to 68 (NYYQILGVSK…QKRAAYDRLG (65 aa)). Residues 136–214 (GIEKNINFSS…CHGMGRYHKQ (79 aa)) form a CR-type zinc finger. Residues cysteine 149, cysteine 152, cysteine 166, cysteine 169, cysteine 188, cysteine 191, cysteine 202, and cysteine 205 each contribute to the Zn(2+) site. 4 CXXCXGXG motif repeats span residues 149–156 (CNTCHGSG), 166–173 (CDACSGVG), 188–195 (CHKCQGNG), and 202–209 (CKKCHGMG).

This sequence belongs to the DnaJ family. Homodimer. Zn(2+) serves as cofactor.

The protein localises to the cytoplasm. In terms of biological role, participates actively in the response to hyperosmotic and heat shock by preventing the aggregation of stress-denatured proteins and by disaggregating proteins, also in an autonomous, DnaK-independent fashion. Unfolded proteins bind initially to DnaJ; upon interaction with the DnaJ-bound protein, DnaK hydrolyzes its bound ATP, resulting in the formation of a stable complex. GrpE releases ADP from DnaK; ATP binding to DnaK triggers the release of the substrate protein, thus completing the reaction cycle. Several rounds of ATP-dependent interactions between DnaJ, DnaK and GrpE are required for fully efficient folding. Also involved, together with DnaK and GrpE, in the DNA replication of plasmids through activation of initiation proteins. The polypeptide is Chaperone protein DnaJ (Rickettsia rickettsii (strain Sheila Smith)).